The chain runs to 184 residues: MASPLPVRTLPLILILLAVLAPGASDFNISSLSGPLSPALTESLLVALPPCHLTGGNATLMVRRANDSKVVKSSFMVPPCRGRRELVSVVDSGSGFTVTRLSAYQVTNLVPGTKYYISYLVTKGASTESSREIPMSTLPRKNMEGIGLGMARTGGMVVITVLLSVAMFLLVVGFITALALGARK.

A signal peptide spans 1 to 25 (MASPLPVRTLPLILILLAVLAPGAS). Residues 26 to 84 (DFNISSLSGPLSPALTESLLVALPPCHLTGGNATLMVRRANDSKVVKSSFMVPPCRGRR) constitute a propeptide that is removed on maturation. Residues N28, N57, and N66 are each glycosylated (N-linked (GlcNAc...) asparagine). At 85 to 155 (ELVSVVDSGS…IGLGMARTGG (71 aa)) the chain is on the lumenal side. A helical membrane pass occupies residues 156–180 (MVVITVLLSVAMFLLVVGFITALAL). The Cytoplasmic portion of the chain corresponds to 181-184 (GARK).

This sequence belongs to the uroplakin-2 family. Interacts with uroplakin-1a (UPK1A). As to expression, expressed only in the urothelium. Localizes to urothelial superficial cells.

The protein resides in the cell membrane. Its function is as follows. Component of the asymmetric unit membrane (AUM); a highly specialized biomembrane elaborated by terminally differentiated urothelial cells. May play an important role in regulating the assembly of the AUM. In Sus scrofa (Pig), this protein is Uroplakin-2 (UPK2).